The primary structure comprises 407 residues: Multidrug resistance protein MdtH (407 aa).

Transmembrane regions (helical) follow at residues 13 to 33 (CFLIIDNMFVVIGFYVVFPLI), 88 to 108 (LGFIIMSVANTPLLLCLSCML), 139 to 159 (VLMLEDSMCAIIGIVLGTWLL), 163 to 183 (FKLVCFTGAILFFIAGVFNAW), 210 to 230 (FVIYVFTLTGYYILSAQVMLM), 247 to 267 (WMYIIEAILSLLLIMPITWWS), 277 to 297 (LMVGLITMIISLFPIGLVKNL), 298 to 318 (HTLLILISLFYIGSIIAEPAR), 340 to 360 (LSLALGGTVGYSGSGWLYDIG), and 368 to 388 (LPWIILSIIGLITLLGLYCQF).

Belongs to the major facilitator superfamily. DHA1 family. MdtH (TC 2.A.1.2.21) subfamily.

It localises to the cell inner membrane. The chain is Multidrug resistance protein MdtH from Blochmanniella pennsylvanica (strain BPEN).